A 156-amino-acid chain; its full sequence is Large ribosomal subunit protein uL30 (156 aa).

The protein belongs to the universal ribosomal protein uL30 family. In terms of assembly, part of the 50S ribosomal subunit.

This Sulfolobus acidocaldarius (strain ATCC 33909 / DSM 639 / JCM 8929 / NBRC 15157 / NCIMB 11770) protein is Large ribosomal subunit protein uL30.